Consider the following 96-residue polypeptide: Muconolactone Delta-isomerase 1 (96 aa).

The protein belongs to the muconolactone Delta-isomerase family. In terms of assembly, homodecamer.

The catalysed reaction is (S)-muconolactone = (4,5-dihydro-5-oxofuran-2-yl)-acetate. Its pathway is aromatic compound metabolism; beta-ketoadipate pathway; 5-oxo-4,5-dihydro-2-furylacetate from catechol: step 3/3. The protein is Muconolactone Delta-isomerase 1 (catC1) of Acinetobacter lwoffii.